We begin with the raw amino-acid sequence, 209 residues long: MVNSDYSLYLVTDRSLLQGRSLLEEVRKAVKGGVSMVQLREKEAGSREFYELAQTLQTELRELGVPLLINDRLDIALAVDADGLHLGQDDLPLPVARSLLGKEKIIGLSINKREEAREGEKMGADYLGVSPVFSTPTKADAPPATGLEFLASLRQEIKIPLVAIGGINKENLKMIKETGADGAAVISALMGASDIEGEARKLRQIWERN.

4-amino-2-methyl-5-(diphosphooxymethyl)pyrimidine is bound by residues 38 to 42 (QLREK) and N70. Mg(2+)-binding residues include D71 and D90. S109 is a 4-amino-2-methyl-5-(diphosphooxymethyl)pyrimidine binding site. Position 135-137 (135-137 (TPT)) interacts with 2-[(2R,5Z)-2-carboxy-4-methylthiazol-5(2H)-ylidene]ethyl phosphate. K138 is a binding site for 4-amino-2-methyl-5-(diphosphooxymethyl)pyrimidine. 2-[(2R,5Z)-2-carboxy-4-methylthiazol-5(2H)-ylidene]ethyl phosphate contacts are provided by residues G166 and 186–187 (IS).

This sequence belongs to the thiamine-phosphate synthase family. It depends on Mg(2+) as a cofactor.

The enzyme catalyses 2-[(2R,5Z)-2-carboxy-4-methylthiazol-5(2H)-ylidene]ethyl phosphate + 4-amino-2-methyl-5-(diphosphooxymethyl)pyrimidine + 2 H(+) = thiamine phosphate + CO2 + diphosphate. The catalysed reaction is 2-(2-carboxy-4-methylthiazol-5-yl)ethyl phosphate + 4-amino-2-methyl-5-(diphosphooxymethyl)pyrimidine + 2 H(+) = thiamine phosphate + CO2 + diphosphate. It carries out the reaction 4-methyl-5-(2-phosphooxyethyl)-thiazole + 4-amino-2-methyl-5-(diphosphooxymethyl)pyrimidine + H(+) = thiamine phosphate + diphosphate. It functions in the pathway cofactor biosynthesis; thiamine diphosphate biosynthesis; thiamine phosphate from 4-amino-2-methyl-5-diphosphomethylpyrimidine and 4-methyl-5-(2-phosphoethyl)-thiazole: step 1/1. Condenses 4-methyl-5-(beta-hydroxyethyl)thiazole monophosphate (THZ-P) and 2-methyl-4-amino-5-hydroxymethyl pyrimidine pyrophosphate (HMP-PP) to form thiamine monophosphate (TMP). In Syntrophomonas wolfei subsp. wolfei (strain DSM 2245B / Goettingen), this protein is Thiamine-phosphate synthase.